Here is a 311-residue protein sequence, read N- to C-terminus: Ribonuclease HIII (311 aa).

Residues 95–311 form the RNase H type-2 domain; it reads MSIVGSDEVG…NTEKAFRLLK (217 aa). The a divalent metal cation site is built by Asp101, Glu102, and Asp206.

It belongs to the RNase HII family. RnhC subfamily. The cofactor is Mn(2+). Requires Mg(2+) as cofactor.

It localises to the cytoplasm. The catalysed reaction is Endonucleolytic cleavage to 5'-phosphomonoester.. Endonuclease that specifically degrades the RNA of RNA-DNA hybrids. The chain is Ribonuclease HIII from Bacillus cereus (strain ZK / E33L).